A 661-amino-acid chain; its full sequence is Transmembrane and coiled-coil domain-containing protein STS1 (661 aa).

Disordered regions lie at residues 34 to 71 (AHHHHDDDDEEQGRTSTSSGGGGGSSSSSSNSGAGADA) and 154 to 185 (VGNTIKGGDQDALPSSSGTDKSPGESSHDDQL). The segment covering 59–69 (SSSSSNSGAGA) has biased composition (low complexity). Over residues 175–184 (SPGESSHDDQ) the composition is skewed to basic and acidic residues. 4 consecutive transmembrane segments (helical) span residues 306-326 (ALLAITGGLAAPAIAAGFGAL), 333-353 (LVPVIGASGFAAMATAAGSVA), 355-375 (SVAVAASFGAAGAGLTGSKMA), and 466-486 (LSGLLAAFAWPATLLAATDFI).

It belongs to the TMCO4 family. As to quaternary structure, interacts with PKS10/PKS2 and 4CLL9/ACOS12.

It is found in the endoplasmic reticulum membrane. Involved in anther lipids biosynthesis and is required for tapetum degradation and pollen wall formation. Required for the formation of Ubisch bodies and microspores. Possesses lipase activity in vitro toward two synthetic substrates, p-nitrophenyl acetate (pNPA) and p-nitrophenyl butyrate (pNPB). The protein is Transmembrane and coiled-coil domain-containing protein STS1 of Oryza sativa subsp. japonica (Rice).